The following is a 562-amino-acid chain: MASASSGPSSSVGFSSFDPAVPSCTLSSAASGIKRPMASEVLEARQDSYISLVPYASGMPIKKIGHRSVDSSGETTYKKTTSSALKGAIQLGITHTVGSLSTKPERDVLMQDFYVVESIFFPSEGSNLTPAHHYNDFRFKTYAPVAFRYFRELFGIRPDDYLYSLCSEPLIELCSSGASGSLFYVSSDDEFIIKTVQHKEAEFLQKLLPGYYMNLNQNPRTLLPKFYGLYCVQAGGKNIRIVVMNNLLPRSVKMHIKYDLKGSTYKRRASQKEREKPLPTFKDLDFLQDIPDGLFLDADMYNALCKTLQRDCLVLQSFKIMDYSLLMSIHNIDHAQREPLSSETQYSVDTRRPAPQKALYSTAMESIQGEARRGGTMETDDHMGGIPARNSKGERLLLYIGIIDILQSYRFVKKLEHSWKALVHDGDTVSVHRPGFYAERFQRFMCNTVFKKIPLKPSPSKKFRSGSSFSRRAGSSGNSCITYQPSVSGEHKAQVTTKAEVEPGVHLGRPDVLPQTPPLEEISEGSPIPDPSFSPLVGETLQMLTTSTTLEKLEVAESEFTH.

A PIPK domain is found at 81-449 (TSSALKGAIQ…RFQRFMCNTV (369 aa)). K103 is covalently cross-linked (Glycyl lysine isopeptide (Lys-Gly) (interchain with G-Cter in ubiquitin)). Position 486 is a phosphoserine (S486). The disordered stretch occupies residues 506-526 (HLGRPDVLPQTPPLEEISEGS).

In terms of assembly, interacts with RAC1. Interacts with TUT1. Forms a complex with CDH1/E-cadherin, CTNNB1/beta-catenin and CTNND1 at the plasma membrane upon calcium stimulation. Found in a ternary complex with IRS1 and DGKZ in the absence of insulin stimulation. Interacts with DGKZ. Interacts with PIP4K2C; the interaction inhibits PIP5K1A kinase activity. In terms of tissue distribution, highly expressed in heart, placenta, skeletal muscle, kidney and pancreas. Detected at lower levels in brain, lung and liver.

It is found in the cell membrane. The protein resides in the cytoplasm. It localises to the nucleus. The protein localises to the nucleus speckle. Its subcellular location is the cell projection. It is found in the ruffle. The protein resides in the lamellipodium. The enzyme catalyses a 1,2-diacyl-sn-glycero-3-phospho-(1D-myo-inositol 4-phosphate) + ATP = a 1,2-diacyl-sn-glycero-3-phospho-(1D-myo-inositol-4,5-bisphosphate) + ADP + H(+). It catalyses the reaction 1-octadecanoyl-2-(5Z,8Z,11Z,14Z)-eicosatetraenoyl-sn-glycero-3-phospho-1D-myo-inositol 4-phosphate + ATP = 1-octadecanoyl-2-(5Z,8Z,11Z,14Z)-eicosatetraenoyl-sn-glycero-3-phospho-1D-myo-inositol 4,5-bisphosphate + ADP + H(+). The catalysed reaction is 1,2-dihexadecanoyl-sn-glycero-3-phospho-(1D-myo-inositol-4-phosphate) + ATP = 1,2-dihexadecanoyl-sn-glycero-3-phospho-(1D-myo-inositol-4,5-bisphosphate) + ADP + H(+). It carries out the reaction 1-octadecanoyl-2-(9Z)-octadecenoyl-sn-glycero-3-phospho-1D-myo-inositol 4-phosphate + ATP = 1-octadecanoyl-2-(9Z)-octadecenoyl-sn-glycero-3-phospho-1D-myo-inositol 4,5-bisphosphate + ADP + H(+). The enzyme catalyses 1-octadecanoyl-2-(9Z)-octadecenoyl-sn-glycero-3-phospho-1D-myo-inositol + ATP = 1-octadecanoyl-2-(9Z)-octadecenoyl-sn-glycero-3-phospho-1D-myo-inositol 5-phosphate + ADP + H(+). It catalyses the reaction 1-octadecanoyl-2-(9Z,12Z)-octadecadienoyl-sn-glycero-3-phospho-1D-myo-inositol + ATP = 1-octadecanoyl-2-(9Z,12Z)-octadecadienoyl-sn-glycero-3-phospho-1D-myo-inositol 5-phosphate + ADP + H(+). The catalysed reaction is 1-octadecanoyl-2-(5Z,8Z,11Z,14Z-eicosatetraenoyl)-sn-glycero-3-phospho-(1D-myo-inositol) + ATP = 1-octadecanoyl-2-(5Z,8Z,11Z,14Z)-eicosatetraenoyl-sn-glycero-3-phospho-1D-myo-inositol 5-phosphate + ADP + H(+). It carries out the reaction 1,2-di-(9Z,12Z)-octadecadienoyl-sn-glycero-3-phospho-1D-myo-inositol + ATP = 1,2-di(9Z,12Z)-octadecadienoyl-sn-glycero-3-phospho-1D-myo-inositol 5-phosphate + ADP + H(+). Activated by diarachidonoyl phosphatidic acid (DAPA), when 1,2-dipalmitoyl-PI4P is used as a substrate. Functionally, catalyzes the phosphorylation of phosphatidylinositol 4-phosphate (PtdIns(4)P/PI4P) to form phosphatidylinositol 4,5-bisphosphate (PtdIns(4,5)P2/PIP2), a lipid second messenger that regulates several cellular processes such as signal transduction, vesicle trafficking, actin cytoskeleton dynamics, cell adhesion, and cell motility. PtdIns(4,5)P2 can directly act as a second messenger or can be utilized as a precursor to generate other second messengers: inositol 1,4,5-trisphosphate (IP3), diacylglycerol (DAG) or phosphatidylinositol-3,4,5-trisphosphate (PtdIns(3,4,5)P3/PIP3). PIP5K1A-mediated phosphorylation of PtdIns(4)P is the predominant pathway for PtdIns(4,5)P2 synthesis. Can also use phosphatidylinositol (PtdIns) as substrate in vitro. Together with PIP5K1C, is required for phagocytosis, both enzymes regulating different types of actin remodeling at sequential steps. Promotes particle ingestion by activating the WAS GTPase-binding protein that induces Arp2/3 dependent actin polymerization at the nascent phagocytic cup. Together with PIP5K1B, is required, after stimulation by G-protein coupled receptors, for the synthesis of IP3 that will induce stable platelet adhesion. Recruited to the plasma membrane by the E-cadherin/beta-catenin complex where it provides the substrate PtdIns(4,5)P2 for the production of PtdIns(3,4,5)P3, IP3 and DAG, that will mobilize internal calcium and drive keratinocyte differentiation. Positively regulates insulin-induced translocation of SLC2A4 to the cell membrane in adipocytes. Together with PIP5K1C has a role during embryogenesis. Independently of its catalytic activity, is required for membrane ruffling formation, actin organization and focal adhesion formation during directional cell migration by controlling integrin-induced translocation of the small GTPase RAC1 to the plasma membrane. Also functions in the nucleus where it acts as an activator of TUT1 adenylyltransferase activity in nuclear speckles, thereby regulating mRNA polyadenylation of a select set of mRNAs. The sequence is that of Phosphatidylinositol 4-phosphate 5-kinase type-1 alpha from Homo sapiens (Human).